Reading from the N-terminus, the 734-residue chain is Putative K(+)-stimulated pyrophosphate-energized sodium pump (734 aa).

5 helical membrane passes run 3 to 23 (SILFWLVPVASVLALCFAYYF), 58 to 78 (IVGCVFLGLVILFSIMAYGFH), 82 to 102 (VWVPIAFLTGGFFSGLSGFLG), 134 to 154 (VMGLVVVGLGLLDISFWYLLL), and 169 to 189 (LCVITTTMLTFGMGASTQALF). Lys-199 serves as a coordination point for substrate. Mg(2+) is bound by residues Asp-202, Asp-206, Asn-229, and Asp-232. The next 7 membrane-spanning stretches (helical) occupy residues 244-264 (LYESYCGSILATAALGAAAFI), 275-295 (AVIAPMLIAAVGILLSIIGIF), 314-334 (FGTNLSSVLIVAATFLILWLL), 336-356 (LDNWIWISCAVVVGLLVGIVI), 377-397 (SGKTGPATVIISGIGLGMLST), 398-418 (AIPVIAVVVGIIASFLLASGF), and 423-443 (VGMGLYGIGIAAVGMLSTLGI). Asp-455 provides a ligand contact to Mg(2+). 4 helical membrane-spanning segments follow: residues 491-511 (FAIGSAALTGLALLASYIEEI), 557-577 (GMFLGSMMAFLFCGLTMNAVG), 629-649 (ILAPIATGLIFGVTGVLGLLI), and 650-670 (GGLSTGFVLAIFMANAGGAWD). Ca(2+) is bound by residues Asp-670, Asp-696, and Asp-700. Residue Lys-703 participates in substrate binding. A helical membrane pass occupies residues 712 to 732 (ILIKLMSMVAIVMAGLTVAWS).

The protein belongs to the H(+)-translocating pyrophosphatase (TC 3.A.10) family. K(+)-stimulated subfamily. As to quaternary structure, homodimer. Mg(2+) serves as cofactor.

The protein resides in the cell inner membrane. It carries out the reaction Na(+)(in) + diphosphate + H2O = Na(+)(out) + 2 phosphate + H(+). Its activity is regulated as follows. Requires K(+) for maximal activity. Sodium pump that utilizes the energy of pyrophosphate hydrolysis as the driving force for Na(+) movement across the membrane. This is Putative K(+)-stimulated pyrophosphate-energized sodium pump from Bacteroides thetaiotaomicron (strain ATCC 29148 / DSM 2079 / JCM 5827 / CCUG 10774 / NCTC 10582 / VPI-5482 / E50).